We begin with the raw amino-acid sequence, 376 residues long: MSKRDYYEVLGVARTANDEELKKAYRRCAMKFHPDRNPGDAAAEASFKECKEAYEVLSDGNKRRMYDSHGHAAFEHGMGGGGGPGGPDMNDIFGDIFGNIFGGAGGGGPRQARRGADIGYVMELDLEEAVRGVERRIEIPTLAECGDCDGSGSEDGKVETCNVCHGRGQVRIQRGIFAMQQACHNCGGRGQIIAKPCKTCHGNGRVEEDKVLSVKVPAGVDTGDRIRLSGEGEAGPAGTPPGDLYVEVRVREHAIFQRDGDDLHCEVPIRISQAALGDTVRVATLGGEAEIRIPAETQTGKLFRLRGKGVRSVRSRSEGDLYCRVVVETPVNLTNDQRKLLEQFEATFNGEDARKHSPKSATFIDGVKGFWDRMTS.

In terms of domain architecture, J spans 5-70; the sequence is DYYEVLGVAR…NKRRMYDSHG (66 aa). The CR-type zinc finger occupies 132–209; it reads GVERRIEIPT…CHGNGRVEED (78 aa). 8 residues coordinate Zn(2+): C145, C148, C161, C164, C183, C186, C197, and C200. CXXCXGXG motif repeat units lie at residues 145–152, 161–168, 183–190, and 197–204; these read CGDCDGSG, CNVCHGRG, CHNCGGRG, and CKTCHGNG. Residues 223 to 242 are disordered; it reads GDRIRLSGEGEAGPAGTPPG.

Belongs to the DnaJ family. Homodimer. The cofactor is Zn(2+).

It localises to the cytoplasm. In terms of biological role, participates actively in the response to hyperosmotic and heat shock by preventing the aggregation of stress-denatured proteins and by disaggregating proteins, also in an autonomous, DnaK-independent fashion. Unfolded proteins bind initially to DnaJ; upon interaction with the DnaJ-bound protein, DnaK hydrolyzes its bound ATP, resulting in the formation of a stable complex. GrpE releases ADP from DnaK; ATP binding to DnaK triggers the release of the substrate protein, thus completing the reaction cycle. Several rounds of ATP-dependent interactions between DnaJ, DnaK and GrpE are required for fully efficient folding. Also involved, together with DnaK and GrpE, in the DNA replication of plasmids through activation of initiation proteins. The polypeptide is Chaperone protein DnaJ (Stenotrophomonas maltophilia (strain R551-3)).